Reading from the N-terminus, the 336-residue chain is 3-isopropylmalate dehydrogenase (336 aa).

Residues arginine 87, arginine 97, arginine 121, and aspartate 211 each coordinate substrate. Mg(2+)-binding residues include aspartate 211, aspartate 235, and aspartate 239. NAD(+) is bound at residue 271 to 283; the sequence is GSAPDIAGQGIAD.

The protein belongs to the isocitrate and isopropylmalate dehydrogenases family. LeuB type 2 subfamily. Homodimer. The cofactor is Mg(2+). Mn(2+) serves as cofactor.

The protein resides in the cytoplasm. The enzyme catalyses (2R,3S)-3-isopropylmalate + NAD(+) = 4-methyl-2-oxopentanoate + CO2 + NADH. Its pathway is amino-acid biosynthesis; L-leucine biosynthesis; L-leucine from 3-methyl-2-oxobutanoate: step 3/4. Catalyzes the oxidation of 3-carboxy-2-hydroxy-4-methylpentanoate (3-isopropylmalate) to 3-carboxy-4-methyl-2-oxopentanoate. The product decarboxylates to 4-methyl-2 oxopentanoate. The protein is 3-isopropylmalate dehydrogenase of Rhodococcus opacus (strain B4).